Consider the following 430-residue polypeptide: Argininosuccinate lyase (430 aa).

It belongs to the lyase 1 family. Argininosuccinate lyase subfamily.

The protein localises to the cytoplasm. It carries out the reaction 2-(N(omega)-L-arginino)succinate = fumarate + L-arginine. It functions in the pathway amino-acid biosynthesis; L-arginine biosynthesis; L-arginine from L-ornithine and carbamoyl phosphate: step 3/3. The chain is Argininosuccinate lyase from Sorangium cellulosum (strain So ce56) (Polyangium cellulosum (strain So ce56)).